A 604-amino-acid chain; its full sequence is uncharacterized protein (604 aa).

The 284-residue stretch at 49–332 (LILVMLMVVI…LANQFNTMLS (284 aa)) folds into the ABC transmembrane type-1 domain. The next 4 membrane-spanning stretches (helical) occupy residues 50 to 70 (ILVM…PFVI), 86 to 106 (LIPV…SLWF), 172 to 192 (VITF…LTLI), and 288 to 308 (IAAI…SIVV). Positions 366-600 (IEFRDVSFGY…KGFYSDLYES (235 aa)) constitute an ABC transporter domain. 399 to 406 (GPTGAGKT) contributes to the ATP binding site. Residues 510-530 (LISIARAVLADPVLLILDEAT) form a helical membrane-spanning segment.

This sequence belongs to the ABC transporter superfamily.

It localises to the cell membrane. This is an uncharacterized protein from Bacillus subtilis (strain 168).